The chain runs to 535 residues: MEEGARHRNNTEKKHPGGGESDASPEAGSGGGGVALKKEIGLVSACGIIVGNIIGSGIFVSPKGVLENAGSVGLALIVWIVTGFITVVGALCYAELGVTIPKSGGDYSYVKDIFGGLAGFLRLWIAVLVIYPTNQAVIALTFSNYVLQPLFPTCFPPESGLRLLAAICLLLLTWVNCSSVRWATRVQDIFTAGKLLALALIIIMGIVQICKGEYFWLEPKNAFENFQEPDIGLVALAFLQGSFAYGGWNFLNYVTEELVDPYKNLPRAIFISIPLVTFVYVFANVAYVTAMSPQELLASNAVAVTFGEKLLGVMAWIMPISVALSTFGGVNGSLFTSSRLFFAGAREGHLPSVLAMIHVKRCTPIPALLFTCISTLLMLVTSDMYTLINYVGFINYLFYGVTVAGQIVLRWKKPDIPRPIKINLLFPIIYLLFWAFLLVFSLWSEPVVCGIGLAIMLTGVPVYFLGVYWQHKPKCFSDFIELLTLVSQKMCVVVYPEVERGSGTEEANEDMEEQQQPMYQPTPTKDKDVAGQPQP.

Over residues 1-17 (MEEGARHRNNTEKKHPG) the composition is skewed to basic and acidic residues. Residues 1–30 (MEEGARHRNNTEKKHPGGGESDASPEAGSG) form a disordered region. The Cytoplasmic portion of the chain corresponds to 1–44 (MEEGARHRNNTEKKHPGGGESDASPEAGSGGGGVALKKEIGLVS). Ser-29 carries the phosphoserine modification. The helical transmembrane segment at 45–65 (ACGIIVGNIIGSGIFVSPKGV) threads the bilayer. Ile-53 provides a ligand contact to L-leucine. The Extracellular portion of the chain corresponds to 66–73 (LENAGSVG). Residues 74–95 (LALIVWIVTGFITVVGALCYAE) form a helical membrane-spanning segment. The Cytoplasmic segment spans residues 96 to 116 (LGVTIPKSGGDYSYVKDIFGG). The helical transmembrane segment at 117 to 149 (LAGFLRLWIAVLVIYPTNQAVIALTFSNYVLQP) threads the bilayer. Asn-134 serves as a coordination point for L-tryptophan. Residues 150 to 157 (LFPTCFPP) lie on the Extracellular side of the membrane. The helical transmembrane segment at 158-178 (ESGLRLLAAICLLLLTWVNCS) threads the bilayer. Over 179 to 181 (SVR) the chain is Cytoplasmic. The helical transmembrane segment at 182 to 210 (WATRVQDIFTAGKLLALALIIIMGIVQIC) threads the bilayer. The Extracellular segment spans residues 211-230 (KGEYFWLEPKNAFENFQEPD). Residues 231–252 (IGLVALAFLQGSFAYGGWNFLN) traverse the membrane as a helical segment. Gly-246 serves as a coordination point for L-leucine. At 253–265 (YVTEELVDPYKNL) the chain is on the cytoplasmic side. A helical membrane pass occupies residues 266-287 (PRAIFISIPLVTFVYVFANVAY). The Extracellular segment spans residues 288-312 (VTAMSPQELLASNAVAVTFGEKLLG). Residues 313-338 (VMAWIMPISVALSTFGGVNGSLFTSS) traverse the membrane as a helical segment. Residues 339–364 (RLFFAGAREGHLPSVLAMIHVKRCTP) lie on the Cytoplasmic side of the membrane. The chain crosses the membrane as a helical span at residues 365-382 (IPALLFTCISTLLMLVTS). Residues 383-386 (DMYT) lie on the Extracellular side of the membrane. A helical transmembrane segment spans residues 387–408 (LINYVGFINYLFYGVTVAGQIV). Asn-395 is an L-tryptophan binding site. Topologically, residues 409 to 423 (LRWKKPDIPRPIKIN) are cytoplasmic. 2 helical membrane-spanning segments follow: residues 424 to 446 (LLFP…WSEP) and 447 to 466 (VVCG…YFLG). The Cytoplasmic portion of the chain corresponds to 467-535 (VYWQHKPKCF…DKDVAGQPQP (69 aa)). Positions 502-535 (SGTEEANEDMEEQQQPMYQPTPTKDKDVAGQPQP) are disordered. The span at 514-523 (QQQPMYQPTP) shows a compositional bias: polar residues.

The protein belongs to the amino acid-polyamine-organocation (APC) superfamily. L-type amino acid transporter (LAT) (TC 2.A.3.8) family. In terms of assembly, disulfide-linked heterodimer composed of the catalytic light chain subunit SLC7A8 and the heavy chain subunit SLC3A2. SLC3A2 acts as chaperones for correct plasma membrane trafficking and stabilization of SLC7A8 and modulates the substrate affinity and specificity of SLC7A8. ICAM-1 associates with the heterodimer SLC3A2/SLC7A8; this interaction regulates SLC7A8 activity. In terms of tissue distribution, strongest expression is observed in kidney and moderate expression in placenta and brain, followed by liver, prostate, testis, ovary, lymph node, thymus, spleen, skeletal muscle and heart. Also expressed in fetal liver as well as in the retinal pigment epithelial cell line ARPE-19 and the intestinal epithelial cell line Caco-2.

It localises to the cell membrane. The protein resides in the basolateral cell membrane. It carries out the reaction L-histidine(in) + L-phenylalanine(out) = L-histidine(out) + L-phenylalanine(in). It catalyses the reaction L-tryptophan(in) + L-phenylalanine(out) = L-tryptophan(out) + L-phenylalanine(in). The enzyme catalyses L-isoleucine(in) + L-phenylalanine(out) = L-isoleucine(out) + L-phenylalanine(in). The catalysed reaction is L-valine(in) + L-phenylalanine(out) = L-valine(out) + L-phenylalanine(in). It carries out the reaction L-leucine(in) + L-phenylalanine(out) = L-leucine(out) + L-phenylalanine(in). It catalyses the reaction L-glutamine(in) + L-phenylalanine(out) = L-glutamine(out) + L-phenylalanine(in). The enzyme catalyses L-cysteine(in) + L-phenylalanine(out) = L-cysteine(out) + L-phenylalanine(in). The catalysed reaction is L-phenylalanine(out) + L-methionine(in) = L-phenylalanine(in) + L-methionine(out). It carries out the reaction L-leucine(out) + L-methionine(in) = L-leucine(in) + L-methionine(out). It catalyses the reaction L-cysteine(out) + L-methionine(in) = L-cysteine(in) + L-methionine(out). The enzyme catalyses S-methylmercury-L-cysteine(out) + L-methionine(in) = S-methylmercury-L-cysteine(in) + L-methionine(out). The catalysed reaction is S-methylmercury-L-cysteine(in) + L-leucine(out) = S-methylmercury-L-cysteine(out) + L-leucine(in). It carries out the reaction S-methylmercury-L-cysteine(in) + L-phenylalanine(out) = S-methylmercury-L-cysteine(out) + L-phenylalanine(in). It catalyses the reaction L-phenylalanine(out) + L-serine(in) = L-phenylalanine(in) + L-serine(out). The enzyme catalyses L-phenylalanine(out) + glycine(in) = L-phenylalanine(in) + glycine(out). The catalysed reaction is L-phenylalanine(out) + L-alanine(in) = L-phenylalanine(in) + L-alanine(out). It carries out the reaction 3,3'-diiodo-L-thyronine(out) = 3,3'-diiodo-L-thyronine(in). It catalyses the reaction 3,3',5-triiodo-L-thyronine(out) = 3,3',5-triiodo-L-thyronine(in). The enzyme catalyses L-dopa(out) + L-phenylalanine(in) = L-dopa(in) + L-phenylalanine(out). With respect to regulation, inhibited by the L-type inhibitor 2-Aminobicyclo-(2,2,1)-heptane-2-carboxylic acid (BCH). Functionally, associates with SLC3A2 to form a functional heterodimeric complex that translocates small and large neutral amino acids with broad specificity and a stoichiometry of 1:1. Functions as amino acid antiporter mediating the influx of extracellular essential amino acids mainly in exchange with the efflux of highly concentrated intracellular amino acids. Has relatively symmetrical selectivities but strongly asymmetrical substrate affinities at both the intracellular and extracellular sides of the transporter. This asymmetry allows SLC7A8 to regulate intracellular amino acid pools (mM concentrations) by exchange with external amino acids (uM concentration range), equilibrating the relative concentrations of different amino acids across the plasma membrane instead of mediating their net uptake. May play an essential role in the reabsorption of neutral amino acids from the epithelial cells to the bloodstream in the kidney. Involved in the uptake of methylmercury (MeHg) when administered as the L-cysteine or D,L-homocysteine complexes, and hence plays a role in metal ion homeostasis and toxicity. Involved in the cellular activity of small molecular weight nitrosothiols, via the stereoselective transport of L-nitrosocysteine (L-CNSO) across the transmembrane. Imports the thyroid hormone diiodothyronine (T2) and to a smaller extent triiodothyronine (T3) but not rT 3 or thyroxine (T4). Mediates the uptake of L-DOPA. May participate in auditory function. The polypeptide is Large neutral amino acids transporter small subunit 2 (Homo sapiens (Human)).